Reading from the N-terminus, the 24-residue chain is Transaldolase (24 aa).

Belongs to the transaldolase family.

It is found in the cytoplasm. The enzyme catalyses D-sedoheptulose 7-phosphate + D-glyceraldehyde 3-phosphate = D-erythrose 4-phosphate + beta-D-fructose 6-phosphate. Its pathway is carbohydrate degradation; pentose phosphate pathway; D-glyceraldehyde 3-phosphate and beta-D-fructose 6-phosphate from D-ribose 5-phosphate and D-xylulose 5-phosphate (non-oxidative stage): step 2/3. Its function is as follows. Transaldolase is important for the balance of metabolites in the pentose-phosphate pathway. The sequence is that of Transaldolase from Capsicum annuum var. annuum (Red pepper).